The primary structure comprises 275 residues: Autophagy protein 5 (275 aa).

N-acetylmethionine is present on Met-1. Lys-130 is covalently cross-linked (Glycyl lysine isopeptide (Lys-Gly) (interchain with G-Cter in ATG12)).

It belongs to the ATG5 family. Forms a conjugate with ATG12. Part of the minor complex composed of 4 sets of ATG12-ATG5 and ATG16L1 (400 kDa); this complex interacts with ATG3 leading to disruption of ATG7 interaction and promotion of ATG8-like proteins lipidation. Forms an 800-kDa complex composed of ATG12-ATG5 and ATG16L2. The ATG12-ATG5 conjugate interacts with RAB33A; this interaction is bridged by ATG16L1 and promotes ATG12-ATG5-ATG16L1 complex recruitment to phagophores. Interacts with TECPR1; the interaction is direct and does not take place when ATG16L1 is associated with the ATG5-ATG12 conjugate. Interacts with DHX58/RIG-1, IFIH1/MDA5 and MAVS/IPS-1 in monomeric form as well as in ATG12-ATG5 conjugate form. The interaction with MAVS is further enhanced upon vesicular stomatitis virus (VSV) infection. Interacts with ATG3. Interacts with ATG7 and ATG10. Interacts with FADD. Interacts with Bassoon/BSN; this interaction is important for the regulation of presynaptic autophagy. Interacts with ATG16L2. Post-translationally, conjugated to ATG12; which is essential for autophagy, but is not required for association with isolation membrane. In terms of processing, acetylated by EP300.

It localises to the cytoplasm. The protein localises to the preautophagosomal structure membrane. In terms of biological role, involved in autophagic vesicle formation. Conjugation with ATG12, through a ubiquitin-like conjugating system involving ATG7 as an E1-like activating enzyme and ATG10 as an E2-like conjugating enzyme, is essential for its function. The ATG12-ATG5 conjugate acts as an E3-like enzyme which is required for lipidation of ATG8 family proteins and their association to the vesicle membranes. Involved in mitochondrial quality control after oxidative damage, and in subsequent cellular longevity. Plays a critical role in multiple aspects of lymphocyte development and is essential for both B and T lymphocyte survival and proliferation. Required for optimal processing and presentation of antigens for MHC II. Involved in the maintenance of axon morphology and membrane structures, as well as in normal adipocyte differentiation. Promotes primary ciliogenesis through removal of OFD1 from centriolar satellites and degradation of IFT20 via the autophagic pathway. As part of the ATG8 conjugation system with ATG12 and ATG16L1, required for recruitment of LRRK2 to stressed lysosomes and induction of LRRK2 kinase activity in response to lysosomal stress. Its function is as follows. May play an important role in the apoptotic process, possibly within the modified cytoskeleton. Its expression is a relatively late event in the apoptotic process, occurring downstream of caspase activity. Plays a crucial role in IFN-gamma-induced autophagic cell death by interacting with FADD. This Sus scrofa (Pig) protein is Autophagy protein 5.